The following is a 445-amino-acid chain: Glycerophosphocholine choline phosphodiesterase ENPP6 (445 aa).

Residues 1–22 (MAGKLGVLLLALVLSLAQPASA) form the signal peptide. Substrate is bound by residues aspartate 32, serine 71, and asparagine 92. Residues aspartate 32 and serine 71 each coordinate Zn(2+). Residue serine 71 is the Nucleophile of the active site. Serine 71 bears the Phosphoserine mark. Asparagine 100 and asparagine 118 each carry an N-linked (GlcNAc...) asparagine glycan. A disulfide bridge links cysteine 142 with cysteine 154. Substrate is bound at residue aspartate 193. Positions 193, 197, 240, and 241 each coordinate Zn(2+). Histidine 241 lines the substrate pocket. Residue asparagine 341 is glycosylated (N-linked (GlcNAc...) asparagine). Histidine 356 lines the substrate pocket. Histidine 356 is a binding site for Zn(2+). A glycan (N-linked (GlcNAc...) asparagine) is linked at asparagine 406. Serine 421 carries the GPI-anchor amidated serine lipid modification. The propeptide at 422–445 (SAPGAPPCACALVTVLLVLLAILA) is removed in mature form.

Belongs to the nucleotide pyrophosphatase/phosphodiesterase family. Homodimer; disulfide-linked. Homotetramer. The cofactor is Zn(2+).

It localises to the cell membrane. The catalysed reaction is sn-glycerol 3-phosphocholine + H2O = phosphocholine + glycerol + H(+). The enzyme catalyses a 1-acyl-sn-glycero-3-phosphocholine + H2O = a 1-acyl-sn-glycerol + phosphocholine + H(+). It catalyses the reaction a 1-O-alkyl-sn-glycero-3-phosphocholine + H2O = a 1-O-alkyl-sn-glycerol + phosphocholine + H(+). It carries out the reaction 1-dodecanoyl-sn-glycero-3-phosphocholine + H2O = 1-dodecanoyl-sn-glycerol + phosphocholine + H(+). The catalysed reaction is 1-hexadecanoyl-sn-glycero-3-phosphocholine + H2O = 1-hexadecanoyl-sn-glycerol + phosphocholine + H(+). The enzyme catalyses 1-(5Z,8Z,11Z,14Z-eicosatetraenoyl)-sn-glycero-3-phosphocholine + H2O = 1-(5Z,8Z,11Z,14Z-eicosatetraenoyl)-sn-glycerol + phosphocholine + H(+). It catalyses the reaction 1-tetradecanoyl-sn-glycero-3-phosphocholine + H2O = 1-tetradecanoyl-sn-glycerol + phosphocholine + H(+). It carries out the reaction sphing-4-enine-phosphocholine + H2O = sphing-4-enine + phosphocholine + H(+). The catalysed reaction is 1-(9Z-octadecenoyl)-sn-glycero-3-phosphocholine + H2O = 1-(9Z-octadecenoyl)-sn-glycerol + phosphocholine + H(+). The enzyme catalyses 1-(9Z,12Z)-octadecadienoyl-sn-glycero-3-phosphocholine + H2O = 1-(9Z,12Z-octadecadienoyl)-sn-glycerol + phosphocholine + H(+). It catalyses the reaction glycero-2-phosphocholine + H2O = phosphocholine + glycerol + H(+). Inhibited by EDTA and EGTA in vitro. Choline-specific glycerophosphodiesterase that hydrolyzes glycerophosphocholine (GPC) and lysophosphatidylcholine (LPC) and contributes to supplying choline to the cells. Has a preference for LPC with short (12:0 and 14:0) or polyunsaturated (18:2 and 20:4) fatty acids. In vitro, hydrolyzes only choline-containing lysophospholipids, such as sphingosylphosphorylcholine (SPC), platelet-activating factor (PAF) and lysoPAF, but not other lysophospholipids. The protein is Glycerophosphocholine choline phosphodiesterase ENPP6 of Bos taurus (Bovine).